We begin with the raw amino-acid sequence, 451 residues long: Lipase member H (451 aa).

Positions 1 to 16 (MLRLCFFISFMCLVKS) are cleaved as a signal peptide. Residue Asn-66 is glycosylated (N-linked (GlcNAc...) asparagine). Catalysis depends on Ser-154, which acts as the Nucleophile. Asp-178 acts as the Charge relay system in catalysis. Residues Cys-233 and Cys-246 are joined by a disulfide bond. Catalysis depends on His-248, which acts as the Charge relay system. 3 cysteine pairs are disulfide-bonded: Cys-270-Cys-281, Cys-284-Cys-292, and Cys-427-Cys-446.

Belongs to the AB hydrolase superfamily. Lipase family. As to quaternary structure, interacts with TTMP/C3orf52. In terms of tissue distribution, expressed in placenta and colon. Weakly expressed in small intestine.

Its subcellular location is the secreted. The protein localises to the cell membrane. It catalyses the reaction 1-hexadecanoyl-2-(9Z-octadecenoyl)-sn-glycero-3-phosphate + H2O = 2-(9Z-octadecenoyl)-sn-glycero-3-phosphate + hexadecanoate + H(+). In terms of biological role, hydrolyzes specifically phosphatidic acid (PA) to produce 2-acyl lysophosphatidic acid (LPA; a potent bioactive lipid mediator) and fatty acid. Does not hydrolyze other phospholipids, like phosphatidylserine (PS), phosphatidylcholine (PC) and phosphatidylethanolamine (PE) or triacylglycerol (TG). The protein is Lipase member H (Liph) of Mus musculus (Mouse).